The following is a 2147-amino-acid chain: Large tegument protein deneddylase (2147 aa).

The deubiquitination activity stretch occupies residues 1–233 (MKIVRASRDQ…PDIDASVMSG (233 aa)). Residues 3 to 223 (IVRASRDQSA…LVQIMDQYKD (221 aa)) enclose the Peptidase C76 domain. Residues Cys23, Asp156, and His158 contribute to the active site. Disordered stretches follow at residues 228 to 301 (ASVM…RSRR), 1419 to 1438 (EIGQHKKDPPSTGEEVGLPE), 1567 to 1589 (SSSSGGGNGSGASSRQKDQQNAT), and 2034 to 2072 (RDPPRLKRASGDSSSSVPAEDRDPDARPQDSVPDQSLSE). A compositionally biased stretch (low complexity) spans 240–261 (SISSSAASASASVSPLPSGAAS). Residue Thr292 is a region of interest, interaction with inner tegument protein. The span at 2052-2061 (AEDRDPDARP) shows a compositional bias: basic and acidic residues.

It belongs to the herpesviridae large tegument protein family. As to quaternary structure, interacts with host CUL1 and CUL4A; these interactions inhibit the E3 ligase activity of cullins. Interacts with inner tegument protein. Interacts with capsid vertex specific component CVC2. Interacts with the major capsid protein/MCP.

The protein localises to the virion tegument. The protein resides in the host cytoplasm. It localises to the host nucleus. It catalyses the reaction Thiol-dependent hydrolysis of ester, thioester, amide, peptide and isopeptide bonds formed by the C-terminal Gly of ubiquitin (a 76-residue protein attached to proteins as an intracellular targeting signal).. In terms of biological role, large tegument protein that plays multiple roles in the viral cycle. During viral entry, remains associated with the capsid while most of the tegument is detached and participates in the capsid transport toward the host nucleus. Plays a role in the routing of the capsid at the nuclear pore complex and subsequent uncoating. Within the host nucleus, acts as a deneddylase and promotes the degradation of nuclear CRLs (cullin-RING ubiquitin ligases) and thereby stabilizes nuclear CRL substrates, while cytoplasmic CRLs remain unaffected. These modifications prevent host cell cycle S-phase progression and create a favorable environment allowing efficient viral genome replication. Participates later in the secondary envelopment of capsids. Indeed, plays a linker role for the association of the outer viral tegument to the capsids together with the inner tegument protein. In Mus musculus (Mouse), this protein is Large tegument protein deneddylase (M48).